The chain runs to 368 residues: Phospho-N-acetylmuramoyl-pentapeptide-transferase (368 aa).

Transmembrane regions (helical) follow at residues 32–52, 79–99, 102–122, 140–160, 176–196, 207–227, 247–267, 271–291, 296–316, and 345–365; these read TGGA…WIID, TPTM…VLWA, LNPY…IGFY, TRLL…IRLG, VVVD…VGAG, GLAI…AYLA, LAVL…FNAP, IFMG…IAVA, IVLA…IVQV, and QIVI…LSTL.

Belongs to the glycosyltransferase 4 family. MraY subfamily. Requires Mg(2+) as cofactor.

The protein resides in the cell inner membrane. The catalysed reaction is UDP-N-acetyl-alpha-D-muramoyl-L-alanyl-gamma-D-glutamyl-meso-2,6-diaminopimeloyl-D-alanyl-D-alanine + di-trans,octa-cis-undecaprenyl phosphate = di-trans,octa-cis-undecaprenyl diphospho-N-acetyl-alpha-D-muramoyl-L-alanyl-D-glutamyl-meso-2,6-diaminopimeloyl-D-alanyl-D-alanine + UMP. It functions in the pathway cell wall biogenesis; peptidoglycan biosynthesis. Functionally, catalyzes the initial step of the lipid cycle reactions in the biosynthesis of the cell wall peptidoglycan: transfers peptidoglycan precursor phospho-MurNAc-pentapeptide from UDP-MurNAc-pentapeptide onto the lipid carrier undecaprenyl phosphate, yielding undecaprenyl-pyrophosphoryl-MurNAc-pentapeptide, known as lipid I. The sequence is that of Phospho-N-acetylmuramoyl-pentapeptide-transferase from Nitrobacter hamburgensis (strain DSM 10229 / NCIMB 13809 / X14).